Here is a 515-residue protein sequence, read N- to C-terminus: Rop guanine nucleotide exchange factor 12 (515 aa).

The PRONE domain occupies 83-446 (QARERQLLAD…RAGNKRNTPL (364 aa)). Position 510 is a phosphoserine (Ser510).

As to quaternary structure, interacts (via C-terminus) with PRK2. Interacts with PRK6. Expressed in pollen grains.

The protein resides in the cytoplasm. It is found in the cell membrane. Its activity is regulated as follows. Phosphorylation at Ser-510 by PRK2 may release ROPGEF12 auto-inhibition, thereby activating ROPGEF12 and downstream Rop signaling. Its function is as follows. Guanine-nucleotide exchange factor (GEF) that acts as an activator of Rop (Rho of plants) GTPases by promoting the exchange of GDP for GTP. May be recruited by PRK2 at the plasma membrane to maintain polar Rop activity in the pollen tube and control polarized pollen tube growth. The sequence is that of Rop guanine nucleotide exchange factor 12 from Arabidopsis thaliana (Mouse-ear cress).